Consider the following 199-residue polypeptide: DNA dC-&gt;dU-editing enzyme APOBEC-3A (199 aa).

Positions 27–143 constitute a CMP/dCMP-type deaminase domain; the sequence is GRHKTYLCYE…PLYKEALQML (117 aa). His-70 contacts Zn(2+). Glu-72 serves as the catalytic Proton donor. 2 residues coordinate Zn(2+): Cys-101 and Cys-106.

It belongs to the cytidine and deoxycytidylate deaminase family. Interacts with AGO2. Interacts with TRIB3 (via N-terminus). It depends on Zn(2+) as a cofactor. Expressed in peripheral leukocytes with higher expression in CD14-positive phagocytic cells. Highly expressed in keratinocytes and in periphery blood monocytes. Also detected in non-lymphoid tissues including lung and adipose tissues. Found at high levels in colorectal adenocarcinoma, Burkitt's lymphoma and chronic myelogenous leukemia.

It is found in the nucleus. The protein localises to the cytoplasm. The catalysed reaction is a 2'-deoxycytidine in single-stranded DNA + H2O + H(+) = a 2'-deoxyuridine in single-stranded DNA + NH4(+). Its function is as follows. DNA deaminase (cytidine deaminase) with restriction activity against viruses, foreign DNA and mobility of retrotransposons. Exhibits antiviral activity against adeno-associated virus (AAV) and human T-cell leukemia virus type 1 (HTLV-1) and may inhibit the mobility of LTR and non-LTR retrotransposons. Selectively targets single-stranded DNA and can deaminate both methylcytosine and cytosine in foreign DNA. Can induce somatic hypermutation in the nuclear and mitochondrial DNA. May also play a role in the epigenetic regulation of gene expression through the process of active DNA demethylation. In Homo sapiens (Human), this protein is DNA dC-&gt;dU-editing enzyme APOBEC-3A (APOBEC3A).